Reading from the N-terminus, the 424-residue chain is UPF0597 protein Sbal_3070 (424 aa).

This sequence belongs to the UPF0597 family.

This Shewanella baltica (strain OS155 / ATCC BAA-1091) protein is UPF0597 protein Sbal_3070.